The chain runs to 271 residues: Putative pyruvate, phosphate dikinase regulatory protein (271 aa).

Position 147–154 (147–154 (GLSRTSKT)) interacts with ADP.

Belongs to the pyruvate, phosphate/water dikinase regulatory protein family. PDRP subfamily.

The catalysed reaction is N(tele)-phospho-L-histidyl/L-threonyl-[pyruvate, phosphate dikinase] + ADP = N(tele)-phospho-L-histidyl/O-phospho-L-threonyl-[pyruvate, phosphate dikinase] + AMP + H(+). The enzyme catalyses N(tele)-phospho-L-histidyl/O-phospho-L-threonyl-[pyruvate, phosphate dikinase] + phosphate + H(+) = N(tele)-phospho-L-histidyl/L-threonyl-[pyruvate, phosphate dikinase] + diphosphate. Bifunctional serine/threonine kinase and phosphorylase involved in the regulation of the pyruvate, phosphate dikinase (PPDK) by catalyzing its phosphorylation/dephosphorylation. This is Putative pyruvate, phosphate dikinase regulatory protein from Clostridium tetani (strain Massachusetts / E88).